The sequence spans 272 residues: Probable ribonuclease HI_0526 (272 aa).

The signal sequence occupies residues 1-23; the sequence is MKKLTSILSLIVLVILAIWQYFT. Active-site residues include His148, Glu195, and His199.

This sequence belongs to the RNase T2 family.

This is Probable ribonuclease HI_0526 from Haemophilus influenzae (strain ATCC 51907 / DSM 11121 / KW20 / Rd).